The primary structure comprises 958 residues: Unconventional myosin-Ih (958 aa).

The Myosin motor domain maps to 12–691 (GVQDFVLLDA…TLFATEDAFE (680 aa)). An ATP-binding site is contributed by 105 to 112 (GESGAGKT). S365 carries the phosphoserine modification. The segment at 568-590 (LSSLLEILISKEPSYIRCIKPNE) is actin-binding. 2 IQ domains span residues 694–716 (KHQLVSRIQATYKGCLGRREYMK) and 717–746 (KRQAATKLEAHWRGVLARKEIKRRRWAVQI). The TH1 domain maps to 773-955 (RKNYILNLRY…NGQLRVVSAG (183 aa)).

The protein belongs to the TRAFAC class myosin-kinesin ATPase superfamily. Myosin family. In terms of tissue distribution, highly expressed in the central nervous system, including the forebrain, midbrain and lower medulla. In the lower medulla, it is broadly expressed throughout the reticular formation. It is expressed in the retrotrapezoid nucleus and the nucleus of the solitary tract, as well as motor neurons of the facial, vagal and ambiguus nuclei. Expressed in neonatal inner-ear organs.

Functionally, myosins are actin-based motor molecules with ATPase activity. Unconventional myosins serve in intracellular movements. Their highly divergent tails are presumed to bind to membranous compartments, which would be moved relative to actin filaments. This Mus musculus (Mouse) protein is Unconventional myosin-Ih (Myo1h).